A 429-amino-acid polypeptide reads, in one-letter code: UDP-N-acetylglucosamine 1-carboxyvinyltransferase (429 aa).

22–23 (KN) contacts phosphoenolpyruvate. Arg-102 provides a ligand contact to UDP-N-acetyl-alpha-D-glucosamine. Cys-126 acts as the Proton donor in catalysis. Residue Cys-126 is modified to 2-(S-cysteinyl)pyruvic acid O-phosphothioketal. Residues 131-135 (RPVDL), Asp-316, and Ile-338 contribute to the UDP-N-acetyl-alpha-D-glucosamine site.

The protein belongs to the EPSP synthase family. MurA subfamily.

Its subcellular location is the cytoplasm. The catalysed reaction is phosphoenolpyruvate + UDP-N-acetyl-alpha-D-glucosamine = UDP-N-acetyl-3-O-(1-carboxyvinyl)-alpha-D-glucosamine + phosphate. It functions in the pathway cell wall biogenesis; peptidoglycan biosynthesis. Cell wall formation. Adds enolpyruvyl to UDP-N-acetylglucosamine. The protein is UDP-N-acetylglucosamine 1-carboxyvinyltransferase of Methylobacterium sp. (strain 4-46).